Reading from the N-terminus, the 718-residue chain is Phenylalanine--tRNA ligase beta subunit (718 aa).

Residues 40 to 153 (FLNVSKIKFG…KADLKQDPID (114 aa)) enclose the tRNA-binding domain. Residues 387 to 462 (DKKESFNFVW…RFYGYENLVF (76 aa)) form the B5 domain. Mg(2+)-binding residues include Asp440, Asp446, Glu449, and Glu450.

The protein belongs to the phenylalanyl-tRNA synthetase beta subunit family. Type 1 subfamily. As to quaternary structure, tetramer of two alpha and two beta subunits. Requires Mg(2+) as cofactor.

It is found in the cytoplasm. The catalysed reaction is tRNA(Phe) + L-phenylalanine + ATP = L-phenylalanyl-tRNA(Phe) + AMP + diphosphate + H(+). This chain is Phenylalanine--tRNA ligase beta subunit, found in Mycoplasmopsis pulmonis (strain UAB CTIP) (Mycoplasma pulmonis).